Here is a 239-residue protein sequence, read N- to C-terminus: 4-hydroxy-tetrahydrodipicolinate reductase (239 aa).

NAD(+) is bound by residues Gly-12–Met-17, Gly-94–Thr-96, and Ala-118–Phe-121. The active-site Proton donor/acceptor is His-150. Position 151 (His-151) interacts with (S)-2,3,4,5-tetrahydrodipicolinate. Lys-154 (proton donor) is an active-site residue. Gly-160–Thr-161 serves as a coordination point for (S)-2,3,4,5-tetrahydrodipicolinate.

It belongs to the DapB family.

It is found in the cytoplasm. It carries out the reaction (S)-2,3,4,5-tetrahydrodipicolinate + NAD(+) + H2O = (2S,4S)-4-hydroxy-2,3,4,5-tetrahydrodipicolinate + NADH + H(+). The catalysed reaction is (S)-2,3,4,5-tetrahydrodipicolinate + NADP(+) + H2O = (2S,4S)-4-hydroxy-2,3,4,5-tetrahydrodipicolinate + NADPH + H(+). It participates in amino-acid biosynthesis; L-lysine biosynthesis via DAP pathway; (S)-tetrahydrodipicolinate from L-aspartate: step 4/4. Catalyzes the conversion of 4-hydroxy-tetrahydrodipicolinate (HTPA) to tetrahydrodipicolinate. The chain is 4-hydroxy-tetrahydrodipicolinate reductase from Stenotrophomonas maltophilia (strain K279a).